A 109-amino-acid polypeptide reads, in one-letter code: Trafficking protein particle complex subunit 2-like protein (109 aa).

Belongs to the TRAPP small subunits family. Sedlin subfamily. Component of the multisubunit TRAPP (transport protein particle) complex, which includes at least TRAPPC2, TRAPPC2L, TRAPPC3, TRAPPC3L, TRAPPC4, TRAPPC5, TRAPPC8, TRAPPC9, TRAPPC10, TRAPPC11 and TRAPPC12. Interacts with the heterodimer TRAPPC3-TRAPPC6A.

The protein resides in the cytoplasm. The protein localises to the perinuclear region. It localises to the endoplasmic reticulum. Its subcellular location is the golgi apparatus. May play a role in vesicular transport from endoplasmic reticulum to Golgi. The protein is Trafficking protein particle complex subunit 2-like protein (TRAPPC2L) of Pongo abelii (Sumatran orangutan).